The chain runs to 96 residues: Cysteine proteinase (96 aa).

C25 and C79 are disulfide-bonded. Active-site residues include H31 and N58.

It belongs to the peptidase C1 family.

The protein is Cysteine proteinase of Carica papaya (Papaya).